Reading from the N-terminus, the 319-residue chain is MGFNINIIGTGGTRPLHNRYLSSVLIEYNGDNFLFDCGEGTQMSLRKQKISWQKIKMICITHLHADHITGLLGIVMLMSQSGETRKDPLIIAGPVGIKNYTKNNIDMLKIYTNYEIIYKEIIIDKTEKIIYEDKTKKIEYTRLKHSIECVGYLFIEKDKPGKFNTEKAEELNIPKGPIRKTLQDGKEILINGKIIKPSEILGKSKKGLKVAYITDTGYFKELIQQIKNFNLVIIESTFKNELKKEADKKLHLTAGGAANIVKQAKVLQTGLIHFSERYTLRKDLENLLKEAKLEYPDGEIFLTKDGMRLEANKNNFIIK.

Residues His-62, His-64, Asp-66, His-67, His-145, Asp-215, and His-273 each contribute to the Zn(2+) site. Asp-66 functions as the Proton acceptor in the catalytic mechanism.

It belongs to the RNase Z family. In terms of assembly, homodimer. It depends on Zn(2+) as a cofactor.

The enzyme catalyses Endonucleolytic cleavage of RNA, removing extra 3' nucleotides from tRNA precursor, generating 3' termini of tRNAs. A 3'-hydroxy group is left at the tRNA terminus and a 5'-phosphoryl group is left at the trailer molecule.. Zinc phosphodiesterase, which displays some tRNA 3'-processing endonuclease activity. Probably involved in tRNA maturation, by removing a 3'-trailer from precursor tRNA. This Borreliella afzelii (strain PKo) (Borrelia afzelii) protein is Ribonuclease Z.